A 173-amino-acid polypeptide reads, in one-letter code: Putative metal-dependent hydrolase BA_2700/GBAA_2700/BAS2515 (173 aa).

The Zn(2+) site is built by His65, His156, and His160.

It belongs to the metal hydrolase YfiT family. Homodimer. Requires Zn(2+) as cofactor.

It localises to the cytoplasm. In terms of biological role, possible metal-dependent hydrolase. The polypeptide is Putative metal-dependent hydrolase BA_2700/GBAA_2700/BAS2515 (Bacillus anthracis).